Reading from the N-terminus, the 124-residue chain is Small ribosomal subunit protein uS12c (124 aa).

It belongs to the universal ribosomal protein uS12 family. Part of the 30S ribosomal subunit.

The protein localises to the plastid. Its subcellular location is the chloroplast. In terms of biological role, with S4 and S5 plays an important role in translational accuracy. Located at the interface of the 30S and 50S subunits. The chain is Small ribosomal subunit protein uS12c (rps12) from Cyanidium caldarium (Red alga).